Consider the following 556-residue polypeptide: Arginine--tRNA ligase (556 aa).

A 'HIGH' region motif is present at residues 132–142 (ANPTGPIHLGG).

It belongs to the class-I aminoacyl-tRNA synthetase family. In terms of assembly, monomer.

It is found in the cytoplasm. The catalysed reaction is tRNA(Arg) + L-arginine + ATP = L-arginyl-tRNA(Arg) + AMP + diphosphate. This is Arginine--tRNA ligase from Kocuria rhizophila (strain ATCC 9341 / DSM 348 / NBRC 103217 / DC2201).